The chain runs to 172 residues: Adenine phosphoribosyltransferase (172 aa).

It belongs to the purine/pyrimidine phosphoribosyltransferase family. Homodimer.

It is found in the cytoplasm. The enzyme catalyses AMP + diphosphate = 5-phospho-alpha-D-ribose 1-diphosphate + adenine. It participates in purine metabolism; AMP biosynthesis via salvage pathway; AMP from adenine: step 1/1. Catalyzes a salvage reaction resulting in the formation of AMP, that is energically less costly than de novo synthesis. The polypeptide is Adenine phosphoribosyltransferase (Ligilactobacillus salivarius (strain UCC118) (Lactobacillus salivarius)).